We begin with the raw amino-acid sequence, 886 residues long: DNA double-strand break repair Rad50 ATPase (886 aa).

ATP is bound by residues arginine 13, 33 to 39, and glutamine 128; that span reads NGAGKSS. Coiled coils occupy residues 183-360 and 400-433; these read EQIK…LLET and KEIT…LKSA. One can recognise a Zinc-hook domain in the interval 392–489; that stretch reads LSKAKEEEKE…RLEKVEKALE (98 aa). Zn(2+) contacts are provided by cysteine 437 and cysteine 440. Coiled-coil stretches lie at residues 489 to 518 and 545 to 713; these read EKQE…DAEK and SSAS…KKVE. An ATP-binding site is contributed by 792–797; that stretch reads FLSGGE.

It belongs to the SMC family. RAD50 subfamily. As to quaternary structure, homodimer. Forms a heterotetramer composed of two Mre11 subunits and two Rad50 subunits. Requires Zn(2+) as cofactor.

Functionally, part of the Rad50/Mre11 complex, which is involved in the early steps of DNA double-strand break (DSB) repair. The complex may facilitate opening of the processed DNA ends to aid in the recruitment of HerA and NurA. Rad50 controls the balance between DNA end bridging and DNA resection via ATP-dependent structural rearrangements of the Rad50/Mre11 complex. The polypeptide is DNA double-strand break repair Rad50 ATPase (Archaeoglobus fulgidus (strain ATCC 49558 / DSM 4304 / JCM 9628 / NBRC 100126 / VC-16)).